Here is a 507-residue protein sequence, read N- to C-terminus: ATP synthase subunit alpha, chloroplastic (507 aa).

Position 170–177 (170–177) interacts with ATP; the sequence is GDRQTGKT.

This sequence belongs to the ATPase alpha/beta chains family. As to quaternary structure, F-type ATPases have 2 components, CF(1) - the catalytic core - and CF(0) - the membrane proton channel. CF(1) has five subunits: alpha(3), beta(3), gamma(1), delta(1), epsilon(1). CF(0) has four main subunits: a, b, b' and c.

The protein resides in the plastid. It localises to the chloroplast thylakoid membrane. It carries out the reaction ATP + H2O + 4 H(+)(in) = ADP + phosphate + 5 H(+)(out). In terms of biological role, produces ATP from ADP in the presence of a proton gradient across the membrane. The alpha chain is a regulatory subunit. This chain is ATP synthase subunit alpha, chloroplastic, found in Gossypium hirsutum (Upland cotton).